We begin with the raw amino-acid sequence, 268 residues long: Thymidylate synthase (268 aa).

Residues Arg26 and 131 to 132 contribute to the dUMP site; that span reads RR. Cys151 acts as the Nucleophile in catalysis. DUMP is bound by residues 171–174, Asn182, and 212–214; these read RSAD and HIY. Asp174 serves as a coordination point for (6R)-5,10-methylene-5,6,7,8-tetrahydrofolate. Ser267 lines the (6R)-5,10-methylene-5,6,7,8-tetrahydrofolate pocket.

The protein belongs to the thymidylate synthase family. Bacterial-type ThyA subfamily. Homodimer.

It localises to the cytoplasm. It catalyses the reaction dUMP + (6R)-5,10-methylene-5,6,7,8-tetrahydrofolate = 7,8-dihydrofolate + dTMP. Its pathway is pyrimidine metabolism; dTTP biosynthesis. In terms of biological role, catalyzes the reductive methylation of 2'-deoxyuridine-5'-monophosphate (dUMP) to 2'-deoxythymidine-5'-monophosphate (dTMP) while utilizing 5,10-methylenetetrahydrofolate (mTHF) as the methyl donor and reductant in the reaction, yielding dihydrofolate (DHF) as a by-product. This enzymatic reaction provides an intracellular de novo source of dTMP, an essential precursor for DNA biosynthesis. The sequence is that of Thymidylate synthase from Corynebacterium aurimucosum (strain ATCC 700975 / DSM 44827 / CIP 107346 / CN-1) (Corynebacterium nigricans).